We begin with the raw amino-acid sequence, 464 residues long: tRNA modification GTPase MnmE (464 aa).

Residues Arg25, Glu87, and Lys130 each coordinate (6S)-5-formyl-5,6,7,8-tetrahydrofolate. The TrmE-type G domain occupies 226 to 386 (GLSVVLAGQP…LRAELLRIAG (161 aa)). Residue Asn236 coordinates K(+). GTP-binding positions include 236–241 (NVGKSS), 255–261 (TPIAGTT), and 280–283 (DTAG). Ser240 is a binding site for Mg(2+). Positions 255, 257, and 260 each coordinate K(+). Thr261 contacts Mg(2+). Lys464 lines the (6S)-5-formyl-5,6,7,8-tetrahydrofolate pocket.

Belongs to the TRAFAC class TrmE-Era-EngA-EngB-Septin-like GTPase superfamily. TrmE GTPase family. Homodimer. Heterotetramer of two MnmE and two MnmG subunits. Requires K(+) as cofactor.

It localises to the cytoplasm. In terms of biological role, exhibits a very high intrinsic GTPase hydrolysis rate. Involved in the addition of a carboxymethylaminomethyl (cmnm) group at the wobble position (U34) of certain tRNAs, forming tRNA-cmnm(5)s(2)U34. This is tRNA modification GTPase MnmE from Burkholderia orbicola (strain MC0-3).